The chain runs to 1057 residues: Outer capsid protein VP2 (1057 aa).

Belongs to the orbivirus VP2 family.

It is found in the virion. Its function is as follows. The VP2 protein is one of the two proteins (with VP5) which constitute the virus particle outer capsid. It is the major target of the host immunogenic response. This is Outer capsid protein VP2 (Segment-2) from Anas (ducks).